The following is a 386-amino-acid chain: Queuine tRNA-ribosyltransferase (386 aa).

Asp-99 (proton acceptor) is an active-site residue. Residues 99-103 (DSGGF), Asp-153, Gln-198, and Gly-225 contribute to the substrate site. Residues 256-262 (GVGKPED) are RNA binding. Residue Asp-275 is the Nucleophile of the active site. The interval 280–284 (TRNAR) is RNA binding; important for wobble base 34 recognition. Cys-313, Cys-315, Cys-318, and His-344 together coordinate Zn(2+).

Belongs to the queuine tRNA-ribosyltransferase family. In terms of assembly, homodimer. Within each dimer, one monomer is responsible for RNA recognition and catalysis, while the other monomer binds to the replacement base PreQ1. Zn(2+) is required as a cofactor.

The enzyme catalyses 7-aminomethyl-7-carbaguanine + guanosine(34) in tRNA = 7-aminomethyl-7-carbaguanosine(34) in tRNA + guanine. The protein operates within tRNA modification; tRNA-queuosine biosynthesis. In terms of biological role, catalyzes the base-exchange of a guanine (G) residue with the queuine precursor 7-aminomethyl-7-deazaguanine (PreQ1) at position 34 (anticodon wobble position) in tRNAs with GU(N) anticodons (tRNA-Asp, -Asn, -His and -Tyr). Catalysis occurs through a double-displacement mechanism. The nucleophile active site attacks the C1' of nucleotide 34 to detach the guanine base from the RNA, forming a covalent enzyme-RNA intermediate. The proton acceptor active site deprotonates the incoming PreQ1, allowing a nucleophilic attack on the C1' of the ribose to form the product. After dissociation, two additional enzymatic reactions on the tRNA convert PreQ1 to queuine (Q), resulting in the hypermodified nucleoside queuosine (7-(((4,5-cis-dihydroxy-2-cyclopenten-1-yl)amino)methyl)-7-deazaguanosine). The protein is Queuine tRNA-ribosyltransferase of Acinetobacter baylyi (strain ATCC 33305 / BD413 / ADP1).